The primary structure comprises 67 residues: Large ribosomal subunit protein bL31c (67 aa).

This sequence belongs to the bacterial ribosomal protein bL31 family. Type A subfamily. As to quaternary structure, part of the 50S ribosomal subunit.

The protein resides in the plastid. It is found in the chloroplast. Its function is as follows. Binds the 23S rRNA. This Cyanidioschyzon merolae (strain NIES-3377 / 10D) (Unicellular red alga) protein is Large ribosomal subunit protein bL31c (rpl31).